A 500-amino-acid chain; its full sequence is Cytochrome c-552 (500 aa).

The N-terminal stretch at 1–24 is a signal peptide; it reads MKFLIKSLAVATISILGCLQTALA. 10 residues coordinate heme c: His102, Cys130, Cys133, Lys134, Cys168, Cys171, His172, Cys217, Cys220, and His221. Ca(2+) is bound by residues Glu223, Tyr224, Lys268, and Gln270. Tyr224 provides a ligand contact to substrate. His271 lines the substrate pocket. Heme c contacts are provided by His282, Cys289, Cys292, His293, His308, Cys321, Cys324, His325, and His400. Residues 477–500 are disordered; sequence ARAKGLLPAEEADKPVAAPKAEAK.

This sequence belongs to the cytochrome c-552 family. It depends on Ca(2+) as a cofactor. Heme c is required as a cofactor.

Its subcellular location is the periplasm. The enzyme catalyses 6 Fe(III)-[cytochrome c] + NH4(+) + 2 H2O = 6 Fe(II)-[cytochrome c] + nitrite + 8 H(+). The protein operates within nitrogen metabolism; nitrate reduction (assimilation). Catalyzes the reduction of nitrite to ammonia, consuming six electrons in the process. The chain is Cytochrome c-552 from Mannheimia haemolytica (Pasteurella haemolytica).